A 375-amino-acid chain; its full sequence is Anhydro-N-acetylmuramic acid kinase 1 (375 aa).

20-27 (GTSFDGVD) provides a ligand contact to ATP. The interval 351–375 (APSTTGVAAPVGGGRRSKPGARELS) is disordered.

This sequence belongs to the anhydro-N-acetylmuramic acid kinase family.

The enzyme catalyses 1,6-anhydro-N-acetyl-beta-muramate + ATP + H2O = N-acetyl-D-muramate 6-phosphate + ADP + H(+). The protein operates within amino-sugar metabolism; 1,6-anhydro-N-acetylmuramate degradation. It functions in the pathway cell wall biogenesis; peptidoglycan recycling. Functionally, catalyzes the specific phosphorylation of 1,6-anhydro-N-acetylmuramic acid (anhMurNAc) with the simultaneous cleavage of the 1,6-anhydro ring, generating MurNAc-6-P. Is required for the utilization of anhMurNAc either imported from the medium or derived from its own cell wall murein, and thus plays a role in cell wall recycling. This is Anhydro-N-acetylmuramic acid kinase 1 from Jannaschia sp. (strain CCS1).